Here is a 254-residue protein sequence, read N- to C-terminus: rRNA N-glycosylase sapovaccarin-S1 (254 aa).

It belongs to the ribosome-inactivating protein family. Type 1 RIP subfamily. In terms of tissue distribution, expressed in seeds; most abundant in the perisperm.

The enzyme catalyses Endohydrolysis of the N-glycosidic bond at one specific adenosine on the 28S rRNA.. Exhibits N-glycosylase activity. Catalyzes the release of one adenine from a ribosome. Acts as a ribosome-inactivating protein and inhibits protein synthesis in a rabbit-reticulocyte lysate system and in various cell lines (in vitro). Induces cell death in Huh-7 liver cells. May contribute to the protection against plant pests and predators or play a role in regulating the death of plant cells. This chain is rRNA N-glycosylase sapovaccarin-S1, found in Gypsophila vaccaria (Cow soapwort).